We begin with the raw amino-acid sequence, 672 residues long: Nuclear RNA export factor 1 (672 aa).

Disordered stretches follow at residues 1–52 and 73–101; these read MPKR…SFKP and DEDDDMSDMTTAVKDRPTSRRRGSPIPRG. The span at 40–49 shows a compositional bias: basic residues; the sequence is RKDRNKRRVS. The region spanning 113-193 is the RRM domain; it reads WYQVTLQNAQ…PRVRSGIPLV (81 aa). LRR repeat units follow at residues 255 to 280, 281 to 304, 305 to 332, and 333 to 360; these read DLEALNLNDNSISSMEAFKGVEKRLP, NLKILYLGDNKIPSLAHLVVLRNL, SILELVLKNNPCRSRYKDSQQFISEVRR, and KFPKLVKLDGETLEPQITFDLSEQGRLL. The NTF2 domain occupies 375-529; it reads VVRQFLDQYF…FCIRNETIFI (155 aa). Residues 541 to 564 are disordered; it reads KRSQHQPAPGAMPSTSSAVTSPQA. Residues 553–563 are compositionally biased toward polar residues; that stretch reads PSTSSAVTSPQ. Phosphoserine is present on Ser561. In terms of domain architecture, TAP-C spans 618 to 672; sequence STKMQMIEAMSAQSQMNVIWSRKCLEETNWDFNHAAFVFEKLFKENKIPPEAFMK.

It belongs to the NXF family. In terms of assembly, interacts with Nxt1. Interacts with ZC3H3. Forms a complex with Nup358/RanBP2, RanGAP and Nxt1. Interacts with Nup54 and Nup58. Interacts with Orc3 and Hpr1. As to expression, expressed ubiquitously.

It localises to the nucleus. It is found in the nucleoplasm. The protein resides in the cytoplasm. Its subcellular location is the nucleus envelope. Mediates the export of the majority of mRNAs from the nucleus to the cytoplasm. In ovarian follicle cells, plays a role in transposable element silencing regulation by enabling the nuclear export of flamenco (flam) transcripts and subsequent piRNA biogenesis. The polypeptide is Nuclear RNA export factor 1 (Drosophila melanogaster (Fruit fly)).